A 1107-amino-acid chain; its full sequence is MSKTLKKKKHWLSKVQECGLSGVGGDPCSLLEIRGGAEHGEFPYLGRQREDVASFIVGKVPSQGDVLLEVNGTPVSGLTHRDTLAVIRHFREPIRLKTVKPGKVINKDLRHYLSLQFQKGSIDHKLQQVIRDNLYLRTIPCTTRSPRDGEVPGVDYNFISVEQFKALEDSGVLLESGTYDGNFYGTPKPPAEPNPFQADPVDQVLFDGEFDTETQRKRTTSVSKMQRTDSSLPEEEDEEEREAVNGSSGSTDHRDRQEPSEWGKTVPSYNQTNSSMDFRNYLTRDENLEPLPKNWEMAYTEAGMIYFIDHNTKTTTWLDPRLCKKAKAPEDCEDGELPYGWEKIEDPQYGTYYVDHINQKTQFDNPVLEAKRKKQLNPAPSEGTVHQEPENSQFTRDPSQLKGALLHTSLKKSAMGFGFTIIGGDRPDEFLQVKNVLKDGPAAQDGKIAPGDVIVDINGTCVLGHTHAEVVQMFQLIPINQYVNMTLCRGYPLPEDSDDPVADIVNTVPPIINGQMLTQGDINMGSQELKSGVIDLDQRGKPGLMVVNGRLNGPSLDIQDQRTSMASSGNSLPELVTIPLLKGPKGFGFAIADSPMGQKVKMILDSQWCPGLQKGDVIKEICHQNVQNLTHIQVVEVLKQFPVGAEVPLLILRGGPPSPSKVTKVKSDKQELMGSIEAIAPGEPLPQPLPFPPNLARSCSPKLDPSEVYKKSKNIFEDKPPNTKDLDVFLRKQESGFGFRVLGGDGPDQAIYIGAIIPLGAAEKDGRLRAADELICIDGVPVKGKSHKQVLDLMTNAARNGHVLLTVRRQIYYTDKQQEEEELQHTPPAHNGSPRLNRIEVSAIPKLPAEAYDVILQRKDNEGFGFVILTSKNKPPPGVIPHKIGRVIEGSPADRCRKLKVGDRISAVNGQSIVELSHDNIVQLIKDAGNTVTLTVIAEEEHRGPPSGSNSARQSPAPQHRPMGQTQPTYGTLDRYSWSDHKADCGPALPAGSWQALSVGCYPVELERGPRGFGFSLRGGKEYNMGLFILRLAEDGPAIKDGRIHVGDQIVEINNEPTQGITHTRAIELIQAGGSKVLLLLRPGTGLIPDYSLAPSSLCSYVKPDQQ.

The PDZ 1 domain maps to 17–102 (ECGLSGVGGD…PIRLKTVKPG (86 aa)). One can recognise a Guanylate kinase-like domain in the interval 110–284 (RHYLSLQFQK…SMDFRNYLTR (175 aa)). An ATP-binding site is contributed by 117 to 124 (FQKGSIDH). Residues 210-277 (FDTETQRKRT…SYNQTNSSMD (68 aa)) form a disordered region. Polar residues predominate over residues 220–231 (TSVSKMQRTDSS). A compositionally biased stretch (acidic residues) spans 232 to 241 (LPEEEDEEER). The span at 251-261 (TDHRDRQEPSE) shows a compositional bias: basic and acidic residues. Positions 267 to 277 (PSYNQTNSSMD) are enriched in polar residues. WW domains lie at 289 to 322 (EPLP…DPRL) and 335 to 368 (GELP…NPVL). Positions 374-398 (KQLNPAPSEGTVHQEPENSQFTRDP) are disordered. PDZ domains lie at 407 to 489 (HTSL…TLCR), 577 to 653 (TIPL…LILR), 727 to 809 (DVFL…TVRR), and 853 to 940 (DVIL…IAEE). Positions 941–975 (EHRGPPSGSNSARQSPAPQHRPMGQTQPTYGTLDR) are disordered. Residues 947–957 (SGSNSARQSPA) show a composition bias toward polar residues. Positions 1003-1085 (PVELERGPRG…KVLLLLRPGT (83 aa)) constitute a PDZ 6 domain.

It belongs to the MAGUK family.

It localises to the cell membrane. The protein resides in the cell junction. Its subcellular location is the tight junction. Acts as a scaffolding protein at cell-cell junctions, thereby regulating various cellular and signaling processes. This Xenopus tropicalis (Western clawed frog) protein is Membrane-associated guanylate kinase, WW and PDZ domain-containing protein 3 (magi3).